A 387-amino-acid polypeptide reads, in one-letter code: Protein REVEILLE 1 (387 aa).

2 stretches are compositionally biased toward polar residues: residues 1–17 (MASS…NASL) and 27–37 (KQIQFNDQSFG). The tract at residues 1–44 (MASSPLTANVQGTNASLRNRDEETADKQIQFNDQSFGGNDYAPK) is disordered. The region spanning 50–104 (TITKERERWTDEEHKKFVEALKLYGRAWRRIEEHVGSKTAVQIRSHAQKFFSKVA) is the HTH myb-type domain. The segment at residues 77 to 100 (WRRIEEHVGSKTAVQIRSHAQKFF) is a DNA-binding region (H-T-H motif). 3 disordered regions span residues 105–200 (REAT…TANA), 306–334 (KAVQ…TTEP), and 350–387 (AFSE…HLHL). A compositionally biased stretch (basic residues) spans 124 to 134 (RPKRKPAHPYP). Positions 141–166 (ADQTSRSVSPSERDTQSPTSVLSTVG) are enriched in polar residues. 2 stretches are compositionally biased toward low complexity: residues 172 to 200 (SLDS…TANA) and 312 to 323 (GSSTGSNTGSVD). Basic and acidic residues predominate over residues 324–333 (DTGHTEKTTE).

The protein resides in the nucleus. In terms of biological role, morning-phased transcription factor integrating the circadian clock and auxin pathways. Binds to the evening element (EE) of promoters. Does not act within the central clock, but regulates free auxin levels in a time-of-day specific manner. Positively regulates the expression of YUC8 during the day, but has no effect during the night. Negative regulator of freezing tolerance. The protein is Protein REVEILLE 1 (RVE1) of Arabidopsis thaliana (Mouse-ear cress).